Consider the following 428-residue polypeptide: Trigger factor (428 aa).

The region spanning 166-250 (GDIVTFDFKG…IKNIKEKILP (85 aa)) is the PPIase FKBP-type domain.

Belongs to the FKBP-type PPIase family. Tig subfamily.

The protein localises to the cytoplasm. It carries out the reaction [protein]-peptidylproline (omega=180) = [protein]-peptidylproline (omega=0). In terms of biological role, involved in protein export. Acts as a chaperone by maintaining the newly synthesized protein in an open conformation. Functions as a peptidyl-prolyl cis-trans isomerase. The polypeptide is Trigger factor (Mycoplasma capricolum subsp. capricolum (strain California kid / ATCC 27343 / NCTC 10154)).